Consider the following 224-residue polypeptide: MSVTKAAVKAVHLGRISYHSALKIQQQHIQQHLDSSSNIPNTLLLCEHEPVYTIGLRQAPYPPAEEQRLKALGADFCRTNRGGLITFHGPGQLVCYPILNLGCFKKSVRWYVCELERTVIKMCGKFGIKASTSPDTGVWVGDNKICAIGIHCGRYITSHGLALNCNTDMSWFDNIVPCGIVGKGVTSLSQELERDVPPDEAIPKLLEAFTEQFNCTLTYNGSLS.

Positions 37–217 constitute a BPL/LPL catalytic domain; the sequence is SNIPNTLLLC…AFTEQFNCTL (181 aa). Substrate contacts are provided by residues 81–88, 147–149, and 160–162; these read RGGLITFH, AIG, and GLA. Cys-178 (acyl-thioester intermediate) is an active-site residue.

The protein belongs to the LipB family.

The protein localises to the mitochondrion. It catalyses the reaction octanoyl-[ACP] + L-lysyl-[protein] = N(6)-octanoyl-L-lysyl-[protein] + holo-[ACP] + H(+). The protein operates within protein modification; protein lipoylation via endogenous pathway; protein N(6)-(lipoyl)lysine from octanoyl-[acyl-carrier-protein]: step 1/2. Catalyzes the transfer of endogenously produced octanoic acid from octanoyl-acyl-carrier-protein (octanoyl-ACP) onto the lipoyl domains of lipoate-dependent enzymes such as the protein H of the glycine cleavage system (GCSH). Lipoyl-ACP can also act as a substrate although octanoyl-ACP is likely to be the physiological substrate. The polypeptide is Octanoyl-[acyl-carrier-protein]:protein N-octanoyltransferase LIPT2, mitochondrial (lipt2) (Danio rerio (Zebrafish)).